A 117-amino-acid polypeptide reads, in one-letter code: Ig heavy chain V region RF (117 aa).

Positions 1-19 are cleaved as a signal peptide; that stretch reads MNFGLRLIFLVLVLKGVLC. The interval 20–49 is framework-1; it reads DVKLVESGGGLVKLGGSLKLSCAASGFTFS. Cysteines 41 and 115 form a disulfide. The interval 50 to 54 is complementarity-determining-1; that stretch reads SYYMS. A framework-2 region spans residues 55 to 68; sequence WVRQTPEKRLELVA. The interval 69–85 is complementarity-determining-2; it reads AINSNGGSTYYPDTVKG. A framework-3 region spans residues 86–117; sequence RFTISRDNAKNTLYLQMSSLKSEDTALYYCAR.

The polypeptide is Ig heavy chain V region RF (Mus musculus (Mouse)).